We begin with the raw amino-acid sequence, 123 residues long: Large ribosomal subunit protein uL14 (123 aa).

It belongs to the universal ribosomal protein uL14 family. Part of the 50S ribosomal subunit. Forms a cluster with proteins L3 and L19. In the 70S ribosome, L14 and L19 interact and together make contacts with the 16S rRNA in bridges B5 and B8.

In terms of biological role, binds to 23S rRNA. Forms part of two intersubunit bridges in the 70S ribosome. This is Large ribosomal subunit protein uL14 from Koribacter versatilis (strain Ellin345).